A 123-amino-acid chain; its full sequence is MAIAKRKPAEPVRIELKKEDTVKVLTGRDKGKEGRVLAVNRETGKVLVEHVMMIKRHTRPNPGKQIKGGIAERESPINASNVLIVCPGCHKAVRIAHHIDKIAGGKARRTRVCRKCGQTLDRK.

Belongs to the universal ribosomal protein uL24 family. Part of the 50S ribosomal subunit.

One of two assembly initiator proteins, it binds directly to the 5'-end of the 23S rRNA, where it nucleates assembly of the 50S subunit. Functionally, one of the proteins that surrounds the polypeptide exit tunnel on the outside of the subunit. This Solibacter usitatus (strain Ellin6076) protein is Large ribosomal subunit protein uL24.